The chain runs to 436 residues: uncharacterized protein (436 aa).

This is an uncharacterized protein from Haemophilus influenzae (strain ATCC 51907 / DSM 11121 / KW20 / Rd).